We begin with the raw amino-acid sequence, 428 residues long: tRNA modification GTPase MnmE (428 aa).

(6S)-5-formyl-5,6,7,8-tetrahydrofolate-binding residues include arginine 20, glutamate 77, and lysine 117. One can recognise a TrmE-type G domain in the interval 213–351; that stretch reads GFEIALVGAP…LLEKIRSVFS (139 aa). Asparagine 223 contacts K(+). GTP contacts are provided by residues 223–228, 242–248, and 267–270; these read NAGKST, SEIAGTT, and DTAG. Position 227 (serine 227) interacts with Mg(2+). K(+) contacts are provided by serine 242, isoleucine 244, and threonine 247. Threonine 248 contacts Mg(2+). Lysine 428 is a (6S)-5-formyl-5,6,7,8-tetrahydrofolate binding site.

This sequence belongs to the TRAFAC class TrmE-Era-EngA-EngB-Septin-like GTPase superfamily. TrmE GTPase family. Homodimer. Heterotetramer of two MnmE and two MnmG subunits. K(+) serves as cofactor.

The protein resides in the cytoplasm. Its function is as follows. Exhibits a very high intrinsic GTPase hydrolysis rate. Involved in the addition of a carboxymethylaminomethyl (cmnm) group at the wobble position (U34) of certain tRNAs, forming tRNA-cmnm(5)s(2)U34. This chain is tRNA modification GTPase MnmE, found in Roseobacter denitrificans (strain ATCC 33942 / OCh 114) (Erythrobacter sp. (strain OCh 114)).